We begin with the raw amino-acid sequence, 481 residues long: Glutamyl-tRNA(Gln) amidotransferase subunit A (481 aa).

Residues K79 and S154 each act as charge relay system in the active site. The disordered stretch occupies residues 136-157 (SAFGATKNPRNPEHVPGGSSGG). Catalysis depends on S178, which acts as the Acyl-ester intermediate.

This sequence belongs to the amidase family. GatA subfamily. In terms of assembly, heterotrimer of A, B and C subunits.

The catalysed reaction is L-glutamyl-tRNA(Gln) + L-glutamine + ATP + H2O = L-glutaminyl-tRNA(Gln) + L-glutamate + ADP + phosphate + H(+). In terms of biological role, allows the formation of correctly charged Gln-tRNA(Gln) through the transamidation of misacylated Glu-tRNA(Gln) in organisms which lack glutaminyl-tRNA synthetase. The reaction takes place in the presence of glutamine and ATP through an activated gamma-phospho-Glu-tRNA(Gln). This Lachnospira eligens (strain ATCC 27750 / DSM 3376 / VPI C15-48 / C15-B4) (Eubacterium eligens) protein is Glutamyl-tRNA(Gln) amidotransferase subunit A.